We begin with the raw amino-acid sequence, 250 residues long: DNA repair protein RecO (250 aa).

It belongs to the RecO family.

Its function is as follows. Involved in DNA repair and RecF pathway recombination. This chain is DNA repair protein RecO, found in Lactobacillus helveticus (strain DPC 4571).